We begin with the raw amino-acid sequence, 68 residues long: Phycobilisome 7.8 kDa linker polypeptide, allophycocyanin-associated, core (68 aa).

Residues 2–57 form the CpcD-like domain; it reads SRLFKITALVPSLSRTRTQRELQNTYFTKLVPYENWFREQQRIQKAGGKIIKVELA.

It belongs to the phycobilisome linker protein family.

Its subcellular location is the cellular thylakoid membrane. Functionally, rod linker protein, associated with allophycocyanin. Linker polypeptides determine the state of aggregation and the location of the disk-shaped phycobiliprotein units within the phycobilisome and modulate their spectroscopic properties in order to mediate a directed and optimal energy transfer. This is Phycobilisome 7.8 kDa linker polypeptide, allophycocyanin-associated, core (apcC) from Nostoc sp. (strain PCC 7120 / SAG 25.82 / UTEX 2576).